Consider the following 556-residue polypeptide: 2-succinyl-5-enolpyruvyl-6-hydroxy-3-cyclohexene-1-carboxylate synthase (556 aa).

The protein belongs to the TPP enzyme family. MenD subfamily. As to quaternary structure, homodimer. The cofactor is Mg(2+). Requires Mn(2+) as cofactor. Thiamine diphosphate is required as a cofactor.

The catalysed reaction is isochorismate + 2-oxoglutarate + H(+) = 5-enolpyruvoyl-6-hydroxy-2-succinyl-cyclohex-3-ene-1-carboxylate + CO2. The protein operates within quinol/quinone metabolism; 1,4-dihydroxy-2-naphthoate biosynthesis; 1,4-dihydroxy-2-naphthoate from chorismate: step 2/7. It functions in the pathway quinol/quinone metabolism; menaquinone biosynthesis. Catalyzes the thiamine diphosphate-dependent decarboxylation of 2-oxoglutarate and the subsequent addition of the resulting succinic semialdehyde-thiamine pyrophosphate anion to isochorismate to yield 2-succinyl-5-enolpyruvyl-6-hydroxy-3-cyclohexene-1-carboxylate (SEPHCHC). This chain is 2-succinyl-5-enolpyruvyl-6-hydroxy-3-cyclohexene-1-carboxylate synthase, found in Salmonella paratyphi B (strain ATCC BAA-1250 / SPB7).